The sequence spans 521 residues: Phosphoethanolamine transferase EptA (521 aa).

The next 6 helical transmembrane spans lie at 18 to 38 (AGLLYSLIFGVLYHFPLFVYV), 47 to 67 (FIAMMVVVLFCVNGALFLALG), 79 to 99 (IVFSLLNSVAFYFISAYKVFL), 118 to 138 (FLSVKLFVFIVVFGVLPGYVI), 150 to 170 (APFLAILALVFIFIASALANT), and 182 to 202 (FIGGLILPFAYSVNAFRVSAL).

Belongs to the phosphoethanolamine transferase family. EptA subfamily.

The protein resides in the cell inner membrane. Its pathway is bacterial outer membrane biogenesis; LPS lipid A biosynthesis. Its function is as follows. Probably catalyzes the addition of a phosphoethanolamine moiety to the dephosphorylated 1-position of the disaccharide backbone of lipid A. Lipid A that is 1-phosphorylated is not a substrate for this enzyme. The protein is Phosphoethanolamine transferase EptA of Helicobacter pylori (strain ATCC 700392 / 26695) (Campylobacter pylori).